The following is a 769-amino-acid chain: Apoptotic enhancer 1 protein (769 aa).

Disordered stretches follow at residues 69–88 (PVRV…SQQY), 265–396 (SVEP…LDES), and 451–518 (PQLP…RSDD). Over residues 275–284 (QQQQPSPQMM) the composition is skewed to low complexity. A compositionally biased stretch (basic and acidic residues) spans 285-295 (KSEEFSEKRDL). Over residues 339 to 353 (STDPHSNHSSPSTSS) the composition is skewed to low complexity. Polar residues-rich tracts occupy residues 354 to 378 (QKAP…TMTR), 453 to 467 (LPTS…TSET), and 474 to 491 (NSES…NNLE). ANK repeat units lie at residues 585-617 (EGIT…AQDS) and 618-652 (DGWT…TLSD). Residues 684-746 (INTGKVYAAY…PRTYLALYPS (63 aa)) enclose the SH3 domain.

Belongs to the iASPP family. As to quaternary structure, interacts with cep-1/p53; the interaction inhibits pro-apoptotic activity of cep-1.

It is found in the nucleus. Functionally, negetively regulates apoptosis via its interaction with cep-1. In Caenorhabditis elegans, this protein is Apoptotic enhancer 1 protein.